A 428-amino-acid polypeptide reads, in one-letter code: Enolase (428 aa).

Gln-163 serves as a coordination point for (2R)-2-phosphoglycerate. The Proton donor role is filled by Glu-205. 3 residues coordinate Mg(2+): Asp-242, Glu-286, and Asp-313. 4 residues coordinate (2R)-2-phosphoglycerate: Lys-338, Arg-367, Ser-368, and Lys-389. The Proton acceptor role is filled by Lys-338.

It belongs to the enolase family. Mg(2+) is required as a cofactor.

The protein resides in the cytoplasm. It is found in the secreted. Its subcellular location is the cell surface. It carries out the reaction (2R)-2-phosphoglycerate = phosphoenolpyruvate + H2O. It participates in carbohydrate degradation; glycolysis; pyruvate from D-glyceraldehyde 3-phosphate: step 4/5. Catalyzes the reversible conversion of 2-phosphoglycerate (2-PG) into phosphoenolpyruvate (PEP). It is essential for the degradation of carbohydrates via glycolysis. The protein is Enolase of Acidovorax ebreus (strain TPSY) (Diaphorobacter sp. (strain TPSY)).